The following is a 499-amino-acid chain: MTTKKLYFLSISIIILVAISIAIYITLNSNTKTRLTNDSQQQIDTIIEHDLQKGHIPGASILIVKNGKVFLNKGYGYQDVDKKVKASPTTKYEIASNTKAFTGLAILKLAQEGRLNLNDDVSKHVPHFKMNYNGQNETITIKQLLAQTSGIPSDITSEDSVTNKNNRLNDVTRAIMGDELHHKPGEEFEYSNMNYDLLGLIIQNVTKQSYTKYITNSWLKPLHMTHTSFKQNNNKSKHDAIGYELQGSTPVVSKPEFNLWDTPSAYMMTSTEDLEHWIKFQLNPPDKYKSLVQQSHKNLSSTIGEPNANAYASGWFTNNDEHLVFHSGTLDNFSSFILLNPKQNYGIVVLANLNSEYVPKLVEHLNTQIVNHKRYSTVASMLNQYKDQFNIVTVLMTTLILLAFIFSAYRAWQMRHGKIILRKSKLTTFLSWLTLCLCIAIALILYALPYLILGSNNWSFVLTWLPIEIKLTLTTAFIALFSMLITLLLILHTTTIKKP.

4 consecutive transmembrane segments (helical) span residues 6 to 26 (LYFLSISIIILVAISIAIYIT), 389 to 409 (FNIVTVLMTTLILLAFIFSAY), 433 to 453 (LTLCLCIAIALILYALPYLIL), and 471 to 491 (LTLTTAFIALFSMLITLLLIL).

The protein localises to the cell membrane. Its precise function is unknown. Has no penicillin-binding activity and is not involved in methicillin resistance. This chain is Protein flp (flp), found in Staphylococcus aureus (strain MRSA252).